The chain runs to 436 residues: Xylose isomerase (436 aa).

Active-site residues include histidine 100 and aspartate 103. Glutamate 231, glutamate 267, histidine 270, aspartate 295, aspartate 306, aspartate 308, and aspartate 338 together coordinate Mg(2+).

Belongs to the xylose isomerase family. In terms of assembly, homotetramer. Requires Mg(2+) as cofactor.

It localises to the cytoplasm. The enzyme catalyses alpha-D-xylose = alpha-D-xylulofuranose. In Agrobacterium fabrum (strain C58 / ATCC 33970) (Agrobacterium tumefaciens (strain C58)), this protein is Xylose isomerase.